Consider the following 178-residue polypeptide: Translation initiation factor IF-3 (178 aa).

This sequence belongs to the IF-3 family. Monomer.

Its subcellular location is the cytoplasm. In terms of biological role, IF-3 binds to the 30S ribosomal subunit and shifts the equilibrium between 70S ribosomes and their 50S and 30S subunits in favor of the free subunits, thus enhancing the availability of 30S subunits on which protein synthesis initiation begins. This chain is Translation initiation factor IF-3, found in Legionella pneumophila (strain Paris).